The primary structure comprises 404 residues: Cysteine desulfurase IscS (404 aa).

Residues 75–76 (AT), N155, Q183, and 203–205 (SAH) contribute to the pyridoxal 5'-phosphate site. K206 carries the post-translational modification N6-(pyridoxal phosphate)lysine. T243 is a binding site for pyridoxal 5'-phosphate. C328 acts as the Cysteine persulfide intermediate in catalysis. C328 provides a ligand contact to [2Fe-2S] cluster.

The protein belongs to the class-V pyridoxal-phosphate-dependent aminotransferase family. NifS/IscS subfamily. As to quaternary structure, homodimer. Forms a heterotetramer with IscU, interacts with other sulfur acceptors. The cofactor is pyridoxal 5'-phosphate.

It is found in the cytoplasm. The enzyme catalyses (sulfur carrier)-H + L-cysteine = (sulfur carrier)-SH + L-alanine. It functions in the pathway cofactor biosynthesis; iron-sulfur cluster biosynthesis. In terms of biological role, master enzyme that delivers sulfur to a number of partners involved in Fe-S cluster assembly, tRNA modification or cofactor biosynthesis. Catalyzes the removal of elemental sulfur atoms from cysteine to produce alanine. Functions as a sulfur delivery protein for Fe-S cluster synthesis onto IscU, an Fe-S scaffold assembly protein, as well as other S acceptor proteins. This chain is Cysteine desulfurase IscS, found in Proteus mirabilis (strain HI4320).